Consider the following 335-residue polypeptide: NAC domain-containing protein 60 (335 aa).

Residues 14-156 (TFPGFKFSPT…ALVICRLRRN (143 aa)) enclose the NAC domain. A DNA-binding region spans residues 112-162 (IGTKRTLVFHIGRAPKGGRTEWLMHEYCMIGVSLDALVICRLRRNTEFQGS). Residues 315–335 (ARWDVVVWLLVMIAVLVFYLV) form a helical membrane-spanning segment.

Expressed in roots, rosette leaves, cauline leaves, shoot apex, stems and flowers.

The protein localises to the membrane. The protein resides in the nucleus. Functionally, transcriptional activator activated by proteolytic cleavage through regulated intramembrane proteolysis (RIP). Transcription factor involved in modulation of abscisic acid (ABA) signaling. Attenuates ABA sensitivity and glucose-induced ABA accumulation. Reduces the expression of ABI4 gene. The sequence is that of NAC domain-containing protein 60 from Arabidopsis thaliana (Mouse-ear cress).